Consider the following 250-residue polypeptide: Sulfate transporter CysZ (250 aa).

The next 4 helical transmembrane spans lie at 27–47, 64–84, 150–170, and 210–230; these read FVVL…YYLF, FLSW…LATF, FLLL…WFLF, and MLVA…PVAV.

It belongs to the CysZ family.

The protein localises to the cell inner membrane. In terms of biological role, high affinity, high specificity proton-dependent sulfate transporter, which mediates sulfate uptake. Provides the sulfur source for the cysteine synthesis pathway. This chain is Sulfate transporter CysZ, found in Vibrio cholerae serotype O1 (strain ATCC 39315 / El Tor Inaba N16961).